A 103-amino-acid chain; its full sequence is Large ribosomal subunit protein bL21 (103 aa).

The protein belongs to the bacterial ribosomal protein bL21 family. As to quaternary structure, part of the 50S ribosomal subunit. Contacts protein L20.

Functionally, this protein binds to 23S rRNA in the presence of protein L20. This chain is Large ribosomal subunit protein bL21, found in Idiomarina loihiensis (strain ATCC BAA-735 / DSM 15497 / L2-TR).